A 98-amino-acid polypeptide reads, in one-letter code: MYNCPYCGKDCVNEAAVNIYLKMVEKFFKYQNKGSDITFEKYPTVGEVGECKETGGRIYLCPYCKKPFKAYYEKDKVVITCPNCGETLCLPATNRTFC.

This is an uncharacterized protein from Methanocaldococcus jannaschii (strain ATCC 43067 / DSM 2661 / JAL-1 / JCM 10045 / NBRC 100440) (Methanococcus jannaschii).